A 317-amino-acid polypeptide reads, in one-letter code: Trem-like transcript 1 protein (317 aa).

The N-terminal stretch at 1–20 (MDCYLLLLLLLLGLAGQGSA) is a signal peptide. Residues 21-122 (DSHPEVLQAP…PQTLHRVSLL (102 aa)) form the Ig-like V-type domain. Residues 21 to 175 (DSHPEVLQAP…EFRRRENSIP (155 aa)) lie on the Extracellular side of the membrane. 2 cysteine pairs are disulfide-bonded: cysteine 39–cysteine 105 and cysteine 53–cysteine 60. The disordered stretch occupies residues 147-166 (TGSLLEDPSLDPSASAGPHE). Residues 176-196 (LIWGAVLLLALVVVAVVIFAV) traverse the membrane as a helical segment. At 197–317 (MARKKGNRLV…PPNSQTPPSK (121 aa)) the chain is on the cytoplasmic side. Cysteine 208 is lipidated: S-palmitoyl cysteine. Residues 212–278 (QSTGVPGMDP…SQPPLPPKVL (67 aa)) form a disordered region. Residues 261-275 (SSEPPAPPSQPPLPP) are compositionally biased toward pro residues. At serine 283 the chain carries Phosphoserine. An ITIM motif is present at residues 284-289 (VTYATV). The segment at 295–317 (DKGKIASCEPVQDPPNSQTPPSK) is disordered. Residues 308-317 (PPNSQTPPSK) are compositionally biased toward polar residues.

When phosphorylated, interacts with PTPN11. When phosphorylated, interacts with PTPN6. In terms of processing, phosphorylated on tyrosine residues. Highly expressed in bone marrow leukocytes, splenic megakaryocytes and platelets. Detected in brain, liver and in peritoneal monocytes.

The protein resides in the cell membrane. Its subcellular location is the cytoplasm. In terms of biological role, cell surface receptor that may play a role in the innate and adaptive immune response. In Mus musculus (Mouse), this protein is Trem-like transcript 1 protein (Treml1).